Consider the following 293-residue polypeptide: N-acetylneuraminate lyase (293 aa).

The aceneuramate site is built by Ser48 and Ser49. Tyr137 serves as the catalytic Proton donor. Catalysis depends on Lys165, which acts as the Schiff-base intermediate with substrate. Residues Thr167, Gly189, Asp191, Glu192, and Ser208 each coordinate aceneuramate.

The protein belongs to the DapA family. NanA subfamily. In terms of assembly, homotetramer.

It localises to the cytoplasm. The enzyme catalyses aceneuramate = aldehydo-N-acetyl-D-mannosamine + pyruvate. It participates in amino-sugar metabolism; N-acetylneuraminate degradation; D-fructose 6-phosphate from N-acetylneuraminate: step 1/5. Functionally, catalyzes the reversible aldol cleavage of N-acetylneuraminic acid (sialic acid; Neu5Ac) to form pyruvate and N-acetylmannosamine (ManNAc) via a Schiff base intermediate. This is N-acetylneuraminate lyase from Staphylococcus carnosus (strain TM300).